The following is a 550-amino-acid chain: uncharacterized protein (550 aa).

Residues 1–53 (MVVIANKGALWAYYCKRLLNSVTYMMYPLIRKRTMKKLLLIVGLLLACSTVMR) form the signal peptide. N-linked (GlcNAc...) asparagine glycans are attached at residues asparagine 296 and asparagine 518.

The protein resides in the endoplasmic reticulum. This is an uncharacterized protein from Schizosaccharomyces pombe (strain 972 / ATCC 24843) (Fission yeast).